Consider the following 306-residue polypeptide: Protein YIPF1 (306 aa).

The Cytoplasmic portion of the chain corresponds to 1–119 (MAAVDDLQFE…VRLYIRSNPD (119 aa)). Residues 33 to 59 (PSVSFKHQPRPPGSLGREEDEELLGTN) are disordered. Acidic residues predominate over residues 50–59 (EEDEELLGTN). Residues 120–140 (LYGPFWICATLVFAIAISGNL) traverse the membrane as a helical segment. Residues 141–162 (SNFLIHLGEKTYHYVPEFQKVS) are Lumenal-facing. The helical transmembrane segment at 163–183 (IAATVIYAYAWLVPLALWGFL) threads the bilayer. The Cytoplasmic segment spans residues 184–200 (LWRNSKVMNIVSYSFLE). Residues 201-221 (IVCVYGYSLFIYIPTAVLWII) form a helical membrane-spanning segment. Residues 222–227 (PQRVIR) are Lumenal-facing. A helical transmembrane segment spans residues 228–248 (WVLVTIALGISGSVLAMTFWP). Residues 249–256 (AVREDNRR) lie on the Cytoplasmic side of the membrane. Residues 257–277 (VALATIVTIMLLHVLLSVGCL) traverse the membrane as a helical segment. Topologically, residues 278–306 (AYFFDAPEMDHLPAAITTPNQTVAAAKSS) are lumenal. A glycan (N-linked (GlcNAc...) asparagine) is linked at N297.

This sequence belongs to the YIP1 family. Interacts with YIPF6; this interaction may stabilize YIPF1. May also form a ternary complex with YIPF2 and YIPF6.

It localises to the golgi apparatus. The protein localises to the cis-Golgi network membrane. The protein resides in the trans-Golgi network membrane. Its subcellular location is the late endosome membrane. This Rattus norvegicus (Rat) protein is Protein YIPF1 (Yipf1).